The following is a 444-amino-acid chain: ATP-dependent protease ATPase subunit HslU (444 aa).

Residues I18, 60-65 (GVGKTE), D256, E322, and R394 contribute to the ATP site.

Belongs to the ClpX chaperone family. HslU subfamily. In terms of assembly, a double ring-shaped homohexamer of HslV is capped on each side by a ring-shaped HslU homohexamer. The assembly of the HslU/HslV complex is dependent on binding of ATP.

It localises to the cytoplasm. Functionally, ATPase subunit of a proteasome-like degradation complex; this subunit has chaperone activity. The binding of ATP and its subsequent hydrolysis by HslU are essential for unfolding of protein substrates subsequently hydrolyzed by HslV. HslU recognizes the N-terminal part of its protein substrates and unfolds these before they are guided to HslV for hydrolysis. In Serratia proteamaculans (strain 568), this protein is ATP-dependent protease ATPase subunit HslU.